We begin with the raw amino-acid sequence, 20 residues long: MKLSILGARVIDPASGLXXV.

This sequence belongs to the metallo-dependent hydrolases superfamily. DHOase family. PyrC' subfamily. Heterododecamer of 6 active PyrB subunits and 6 non-catalytic PyrC' subunits.

Functionally, non-functional DHOase. The sequence is that of Dihydroorotase-like protein (pyrC') from Pseudomonas fluorescens biotype A.